Reading from the N-terminus, the 387-residue chain is Phosphoglycerate kinase (387 aa).

Residues 21-23 (DLN), R36, 59-62 (HLGR), R113, and R146 each bind substrate. ATP is bound by residues K197, E314, and 340–343 (GGDT).

The protein belongs to the phosphoglycerate kinase family. In terms of assembly, monomer.

It is found in the cytoplasm. The catalysed reaction is (2R)-3-phosphoglycerate + ATP = (2R)-3-phospho-glyceroyl phosphate + ADP. Its pathway is carbohydrate degradation; glycolysis; pyruvate from D-glyceraldehyde 3-phosphate: step 2/5. This Enterobacter sp. (strain 638) protein is Phosphoglycerate kinase.